Reading from the N-terminus, the 245-residue chain is tRNA pseudouridine synthase A (245 aa).

The active-site Nucleophile is the Asp52. Tyr110 contacts substrate.

The protein belongs to the tRNA pseudouridine synthase TruA family. In terms of assembly, homodimer.

It carries out the reaction uridine(38/39/40) in tRNA = pseudouridine(38/39/40) in tRNA. In terms of biological role, formation of pseudouridine at positions 38, 39 and 40 in the anticodon stem and loop of transfer RNAs. In Borrelia turicatae (strain 91E135), this protein is tRNA pseudouridine synthase A.